The primary structure comprises 559 residues: Estrogen receptor beta (559 aa).

Residues 1–155 form a modulating region; sequence MAVACSPEKD…SSGGKADLHF (155 aa). Residues 128–148 are disordered; the sequence is TSSKSARRRSQENEEGEVSSG. 2 consecutive NR C4-type zinc fingers follow at residues 156 to 176 and 192 to 216; these read CAVC…CEGC and CPAT…LHKC. Positions 156–221 form a DNA-binding region, nuclear receptor; sequence CAVCHDYASG…RLHKCYNVGM (66 aa). Residues 243–254 show a composition bias toward polar residues; the sequence is RLSSQGRTSGPS. The tract at residues 243-269 is disordered; the sequence is RLSSQGRTSGPSVLNGPAVGPLNTPQP. Positions 273–509 constitute an NR LBD domain; it reads TSKQLIERIM…DLLLEMLDAH (237 aa). Residues 514 to 559 are disordered; the sequence is SRLPRRSPQQETVEQCDAPARPHSPGTSGPTNTWTPSCTGGRGEPQ. The span at 538–551 shows a compositional bias: polar residues; sequence PGTSGPTNTWTPSC.

Belongs to the nuclear hormone receptor family. NR3 subfamily. In terms of assembly, binds DNA as a homodimer. Can form a heterodimer with ER-alpha.

Its subcellular location is the nucleus. Binds estrogens with an affinity similar to that of ER-alpha, and activates expression of reporter genes containing estrogen response elements (ERE) in an estrogen-dependent manner. This Sparus aurata (Gilthead sea bream) protein is Estrogen receptor beta (esr2).